Consider the following 793-residue polypeptide: Serine/threonine-protein phosphatase BSU1 (793 aa).

Kelch repeat units follow at residues 53 to 109 (STTA…LYGT), 110 to 160 (LILI…IAAQ), 214 to 262 (IFLL…VFGG), 264 to 314 (KLHV…NQYQ), and 329 to 388 (HLYV…EASS). A phosphoserine mark is found at S395 and S444. Mn(2+) contacts are provided by D510, H512, D544, and N576. Catalysis depends on H577, which acts as the Proton donor. Residues H629 and H707 each coordinate Mn(2+). S764 bears the Phosphoserine mark.

The protein belongs to the PPP phosphatase family. BSU subfamily. Interacts with CDG1, CDL1 and ASK7/BIN2. Requires Mn(2+) as cofactor. Phosphorylated at Ser-395 and Ser-444. Phosphorylated at Ser-764 by CDG1 and CDL1. As to expression, mainly expressed in young, elongating tissues. In young seedlings, it is expressed at the base of the hypocotyl, at the tip and most peripheral cell layers of cotyledons, and in the vascular cylinder of roots, particularly in the elongation zone and at the point of emergence of lateral roots. In mature plants, it is still present in the root vasculature, but almost completely absent in fully expanded stems and leaves. In flowers, it is mainly expressed in sepal veins, anther filaments, and in the style, suggesting that BSU1 is expressed in actively growing regions and apparently enriched in vascular tissues.

It localises to the nucleus. The catalysed reaction is O-phospho-L-seryl-[protein] + H2O = L-seryl-[protein] + phosphate. It carries out the reaction O-phospho-L-threonyl-[protein] + H2O = L-threonyl-[protein] + phosphate. With respect to regulation, activated by phosphorylation at Ser-764 by CDG1. In terms of biological role, phosphatase that acts as a positive regulator of brassinosteroid (BR) signaling. Dephosphorylates BES1, a transcription factor that regulates the expression of BR-response genes, thereby playing an important role in the regulation of response to BRs. Inactivates the negative regulator of BR signaling ASK7/BIN2 by dephosphorylation at 'Tyr-200'. This Arabidopsis thaliana (Mouse-ear cress) protein is Serine/threonine-protein phosphatase BSU1 (BSU1).